A 286-amino-acid chain; its full sequence is Elongation factor Ts (286 aa).

Positions 82–85 are involved in Mg(2+) ion dislocation from EF-Tu; the sequence is TDFV. The tract at residues 212 to 286 is disordered; the sequence is VAAQTGQKVE…SPSKKGKKKK (75 aa). Residues 215-227 are compositionally biased toward polar residues; the sequence is QTGQKVEQPQAAQ. Over residues 253–269 the composition is skewed to low complexity; it reads ETDSPAAETTTEPPKTT.

Belongs to the EF-Ts family.

It is found in the cytoplasm. Associates with the EF-Tu.GDP complex and induces the exchange of GDP to GTP. It remains bound to the aminoacyl-tRNA.EF-Tu.GTP complex up to the GTP hydrolysis stage on the ribosome. The polypeptide is Elongation factor Ts (Gloeothece citriformis (strain PCC 7424) (Cyanothece sp. (strain PCC 7424))).